The primary structure comprises 81 residues: Large ribosomal subunit protein bL27 (81 aa).

Residues 1–11 are compositionally biased toward polar residues; the sequence is MATSKSGGSSK. The interval 1-21 is disordered; it reads MATSKSGGSSKNGRDSISKRL.

The protein belongs to the bacterial ribosomal protein bL27 family.

The sequence is that of Large ribosomal subunit protein bL27 from Borrelia hermsii (strain HS1 / DAH).